The primary structure comprises 510 residues: ATP synthase subunit alpha (510 aa).

169–176 (GDRQTGKT) lines the ATP pocket.

It belongs to the ATPase alpha/beta chains family. In terms of assembly, F-type ATPases have 2 components, CF(1) - the catalytic core - and CF(0) - the membrane proton channel. CF(1) has five subunits: alpha(3), beta(3), gamma(1), delta(1), epsilon(1). CF(0) has four main subunits: a(1), b(1), b'(1) and c(9-12).

The protein localises to the cell inner membrane. It catalyses the reaction ATP + H2O + 4 H(+)(in) = ADP + phosphate + 5 H(+)(out). Its function is as follows. Produces ATP from ADP in the presence of a proton gradient across the membrane. The alpha chain is a regulatory subunit. This chain is ATP synthase subunit alpha, found in Rhodopseudomonas palustris (strain BisA53).